The chain runs to 276 residues: Tumor necrosis factor-inducible gene 6 protein (276 aa).

A signal peptide spans Met-1–Gly-17. A Link domain is found at Gly-36–Asn-129. 3 disulfide bridges follow: Cys-58–Cys-127, Cys-82–Cys-103, and Cys-135–Cys-161. The N-linked (GlcNAc...) asparagine glycan is linked to Asn-118. Residues Cys-135 to Val-247 form the CUB domain. Positions 183, 191, 232, 234, and 235 each coordinate Ca(2+). A disulfide bridge links Cys-188 with Cys-210. N-linked (GlcNAc...) asparagine glycosylation is present at Asn-258.

Interacts (via Link domain) with inter-alpha-inhibitor (I-alpha-I) component bikunin. Interacts with ITIH2/HC2; this interaction is required for transesterification of the HC to hyaluronan. Interacts (via Link and CUB domains) with ITIH1. Chondroitin sulfate may be required for the stability of the complex. Interacts (via Link domain) with various C-X-C and C-C chemokines including PF4, CXCL8, CXCL11, CXCL12, CCL2, CCL7, CCL19, CCL21, and CCL27; this interaction interferes with chemokine binding to glycosaminoglycans. Interacts (primarily via Link domain) with BMP2; this interaction is inhibited by hyaluronan. Interacts (via both Link and CUB domains) with TNFSF11. Interacts (via CUB domain) with FN1 (via type III repeats 9-14); this interaction enhances fibronectin fibril assembly. TNFAIP6 may act as a bridging molecule between FN1 and THBS1. In terms of tissue distribution, vascular smooth muscle cells.

It localises to the secreted. In terms of biological role, major regulator of extracellular matrix organization during tissue remodeling. Catalyzes the transfer of a heavy chain (HC) from inter-alpha-inhibitor (I-alpha-I) complex to hyaluronan. Cleaves the ester bond between the C-terminus of the HC and GalNAc residue of the chondroitin sulfate chain in I-alpha-I complex followed by transesterification of the HC to hyaluronan. In the process, potentiates the antiprotease function of I-alpha-I complex through release of free bikunin. Acts as a catalyst in the formation of hyaluronan-HC oligomers and hyaluronan-rich matrix surrounding the cumulus cell-oocyte complex, a necessary step for oocyte fertilization. Assembles hyaluronan in pericellular matrices that serve as platforms for receptor clustering and signaling. Enables binding of hyaluronan deposited on the surface of macrophages to LYVE1 on lymphatic endothelium and facilitates macrophage extravasation. Alters hyaluronan binding to functionally latent CD44 on vascular endothelium, switching CD44 into an active state that supports leukocyte rolling. Modulates the interaction of chemokines with extracellular matrix components and proteoglycans on endothelial cell surface, likely preventing chemokine gradient formation. In a negative feedback mechanism, may limit excessive neutrophil recruitment at inflammatory sites by antagonizing the association of CXCL8 with glycosaminoglycans on vascular endothelium. Has a role in osteogenesis and bone remodeling. Inhibits BMP2-dependent differentiation of mesenchymal stem cell to osteoblasts. Protects against bone erosion during inflammation by inhibiting TNFSF11/RANKL-dependent osteoclast activation. In Oryctolagus cuniculus (Rabbit), this protein is Tumor necrosis factor-inducible gene 6 protein (TNFAIP6).